The primary structure comprises 287 residues: Homoserine kinase (287 aa).

ATP is bound at residue 79-89; sequence PLARGLGSSSS.

Belongs to the GHMP kinase family. Homoserine kinase subfamily.

The protein resides in the cytoplasm. The catalysed reaction is L-homoserine + ATP = O-phospho-L-homoserine + ADP + H(+). Its pathway is amino-acid biosynthesis; L-threonine biosynthesis; L-threonine from L-aspartate: step 4/5. Its function is as follows. Catalyzes the ATP-dependent phosphorylation of L-homoserine to L-homoserine phosphate. The protein is Homoserine kinase of Enterococcus faecalis (strain ATCC 700802 / V583).